The primary structure comprises 537 residues: Chaperonin GroEL (537 aa).

Residues 29–32 (TLGP), 86–90 (DGTTT), G413, 477–479 (NAA), and D493 each bind ATP.

The protein belongs to the chaperonin (HSP60) family. As to quaternary structure, forms a cylinder of 14 subunits composed of two heptameric rings stacked back-to-back. Interacts with the co-chaperonin GroES.

The protein localises to the cytoplasm. It catalyses the reaction ATP + H2O + a folded polypeptide = ADP + phosphate + an unfolded polypeptide.. Its function is as follows. Together with its co-chaperonin GroES, plays an essential role in assisting protein folding. The GroEL-GroES system forms a nano-cage that allows encapsulation of the non-native substrate proteins and provides a physical environment optimized to promote and accelerate protein folding. In Lactobacillus delbrueckii subsp. bulgaricus (strain ATCC 11842 / DSM 20081 / BCRC 10696 / JCM 1002 / NBRC 13953 / NCIMB 11778 / NCTC 12712 / WDCM 00102 / Lb 14), this protein is Chaperonin GroEL.